A 627-amino-acid polypeptide reads, in one-letter code: Pescadillo homolog (627 aa).

The region spanning 321–414 (RLRTLFKGLK…QLLPTNKYFI (94 aa)) is the BRCT domain. 3 disordered regions span residues 436–471 (PEEK…AVDQ), 489–562 (YKKY…LQAR), and 596–627 (FEAG…KLGK). Phosphoserine occurs at positions 453 and 457. 2 stretches are compositionally biased toward acidic residues: residues 453-471 (SDDD…AVDQ) and 498-521 (VNED…EELD). The span at 522-533 (EQAKRLKEEKQK) shows a compositional bias: basic and acidic residues. Positions 540-549 (KVHKVNKRQL) are enriched in basic residues. 2 stretches are compositionally biased toward basic and acidic residues: residues 550–559 (HKAEVDEHRL) and 596–605 (FEAGEKEARK). Positions 616–627 (AAAAAKASKLGK) are enriched in low complexity.

Belongs to the pescadillo family.

It localises to the nucleus. The protein localises to the nucleolus. The protein resides in the nucleoplasm. Required for maturation of ribosomal RNAs and formation of the large ribosomal subunit. This chain is Pescadillo homolog, found in Drosophila ananassae (Fruit fly).